The primary structure comprises 422 residues: DNA-directed RNA polymerase III subunit RPC4 (422 aa).

Disordered regions lie at residues 1-80 (MSSN…GQQR), 115-190 (KSEG…DDEE), 219-244 (IQEALSEKPTREPTPSVKTEPVGTGL), and 318-350 (RPAVKEEKEDMETQASDPSKKKKNIKKKDTKDA). Residues 25–29 (KPSLK) carry the Nuclear localization signal motif. Residues 28–37 (LKFKPKAVAR) show a composition bias toward basic residues. Basic and acidic residues predominate over residues 38 to 64 (KSKEEREAAASKVKLEEESKRGNDKKH). Phosphoserine is present on residues Ser137 and Ser138. Positions 138-148 (SENEAEDDDNE) are enriched in acidic residues. Residues 160 to 170 (MGKEFEARNLI) are compositionally biased toward basic and acidic residues. Phosphoserine is present on residues Ser178, Ser182, and Ser224. Residues 219–229 (IQEALSEKPTR) are compositionally biased toward basic and acidic residues. 2 positions are modified to phosphothreonine: Thr228 and Thr232.

This sequence belongs to the eukaryotic RPC4/POLR3D RNA polymerase subunit family. As to quaternary structure, component of the RNA polymerase III (Pol III) complex consisting of 17 subunits. Interacts with RPC37/RPC5. RPC53/RPC4, RPC37/RPC5 and RPC11/RPC10 probably form a Pol III subcomplex.

It is found in the nucleus. DNA-dependent RNA polymerase catalyzes the transcription of DNA into RNA using the four ribonucleoside triphosphates as substrates. Specific peripheric component of RNA polymerase III which synthesizes small RNAs, such as 5S rRNA and tRNAs. Essential for tRNA synthesis. The RPC53/RPC4-RPC37/RPC5 subcomplex is required for terminator recognition and reinitiation. In Saccharomyces cerevisiae (strain ATCC 204508 / S288c) (Baker's yeast), this protein is DNA-directed RNA polymerase III subunit RPC4 (RPC53).